Reading from the N-terminus, the 372-residue chain is Pristinol synthase (372 aa).

Residues 1–12 (MAHETTSGRRLP) are compositionally biased toward basic and acidic residues. The segment at 1-23 (MAHETTSGRRLPDPTSPSDPTRR) is disordered. Residues aspartate 100 and aspartate 104 each contribute to the Mg(2+) site. The DDXXD motif signature appears at 100–104 (DDQFD). A substrate-binding site is contributed by arginine 197. Residues asparagine 243 and serine 247 each contribute to the Mg(2+) site. Lysine 250 lines the substrate pocket. Glutamate 251 contributes to the Mg(2+) binding site. A substrate-binding site is contributed by 337–338 (RY). The tract at residues 349–372 (GRRRPWDGLTTATGTASPRHPRRA) is disordered.

It belongs to the terpene synthase family. Mg(2+) is required as a cofactor.

It carries out the reaction (2E,6E)-farnesyl diphosphate + H2O = (+)-(2S,3R,9R)-pristinol + diphosphate. Its pathway is secondary metabolite biosynthesis; terpenoid biosynthesis. Functionally, catalyzes the conversion of (2E,6E)-farnesyl diphosphate (FPP) to yield a new 5-8 bicyclic (pristinane) sesquiterpenol (+)-(2S,3R,9R)-pristinol via a 1,11-cyclization, which requires the abstraction of the pyrophosphate from FPP to yield the humulyl cation. The only accepted substrate is farnesyl diphosphate (FPP). This chain is Pristinol synthase, found in Streptomyces pristinaespiralis (strain ATCC 25486 / DSM 40338 / CBS 914.69 / JCM 4507 / KCC S-0507 / NBRC 13074 / NRRL 2958 / 5647).